The chain runs to 248 residues: uncharacterized protein (248 aa).

8–32 (EVALVTGASSGIGKAIALELASAGL) is an NADP(+) binding site. Ser-134 contacts substrate. Catalysis depends on Tyr-147, which acts as the Proton acceptor.

Belongs to the short-chain dehydrogenases/reductases (SDR) family.

This is an uncharacterized protein from Sinorhizobium fredii (strain NBRC 101917 / NGR234).